The primary structure comprises 271 residues: Glutamate racemase (271 aa).

Residues 10 to 11 and 42 to 43 contribute to the substrate site; these read DS and YG. The Proton donor/acceptor role is filled by cysteine 73. 74 to 75 contacts substrate; sequence NS. The Proton donor/acceptor role is filled by cysteine 183. 184 to 185 contributes to the substrate binding site; it reads TH.

This sequence belongs to the aspartate/glutamate racemases family.

The catalysed reaction is L-glutamate = D-glutamate. The protein operates within cell wall biogenesis; peptidoglycan biosynthesis. Functionally, provides the (R)-glutamate required for cell wall biosynthesis. The chain is Glutamate racemase from Saccharopolyspora erythraea (strain ATCC 11635 / DSM 40517 / JCM 4748 / NBRC 13426 / NCIMB 8594 / NRRL 2338).